The sequence spans 376 residues: MSLFGALMGDFDDDLGLMNNHMNHTMNAMNMQMRSMNRLMNSFMPDPFMQVSPFDQGFQQNALMERPQMPAMPAMGLFGMPMMPNFNRLLNADIGGNSGASFCQSTVMTMSSGPDGRPQIYQASTSTKTGPGGVRETRRTVQDSRTGVKKMAIGHHIGERAHIIEKEQDMRSGQLEERQEFINLEEGEAEQFDREFTSRASRGAVQSRHHAGGMQAIMPARPAAHTSTLTIEPVEDDDDDDDDCVIQEQQPVRSSAGRHYSSAPTAPQNSGNIATAAAPTPTSSPTTYDTSNGNNNNYVSSRRSYLRNGHGHSLATPRRPLRTPPSSPLATVSTSPSIHPHPYAANPRRQQRAVKHFHTEDEAASSYKAVKRGKKK.

Residues 96-202 (GNSGASFCQS…DREFTSRASR (107 aa)) are interaction with DREF. 3 disordered regions span residues 124–147 (STSTKTGPGGVRETRRTVQDSRTG), 187–224 (GEAEQFDREFTSRASRGAVQSRHHAGGMQAIMPARPAA), and 250–376 (QPVR…GKKK). The segment covering 262 to 273 (SAPTAPQNSGNI) has biased composition (polar residues). Low complexity predominate over residues 274–318 (ATAAAPTPTSSPTTYDTSNGNNNNYVSSRRSYLRNGHGHSLATPR). Phosphothreonine is present on T323.

This sequence belongs to the MLF family. Interacts with DRE-binding factor Dref. As to expression, expressed at high levels in unfertilized eggs, early embryos, pupae and adult males while a low level expression is found in adult females and larvae.

It localises to the cytoplasm. In Drosophila melanogaster (Fruit fly), this protein is Myeloid leukemia factor (Mlf).